Reading from the N-terminus, the 609-residue chain is Probable G-protein coupled receptor 153 (609 aa).

Residues 1-11 (MSDERRLPGSA) are Extracellular-facing. A helical membrane pass occupies residues 12 to 32 (VGWLVCGGLSLLANAWGILSV). Over 33 to 41 (GAKQKKWKP) the chain is Cytoplasmic. A helical membrane pass occupies residues 42 to 62 (LEFLLCTLAATHMLNVAVPIA). Over 63–84 (TYSVVQLRRQRPDFEWNEGLCK) the chain is Extracellular. A helical membrane pass occupies residues 85-105 (VFVSTFYTLTLATCFSVTSLS). The Cytoplasmic segment spans residues 106–126 (YHRMWMVCWPVNYRLSNAKKQ). A helical membrane pass occupies residues 127–147 (AVHTVMGIWMVSFILSALPAV). At 148 to 175 (GWHDTSERFYTHGCRFIVAEIGLGFGVC) the chain is on the extracellular side. A helical transmembrane segment spans residues 176 to 196 (FLLLVGGSVAMGVICTAIALF). Residues 197 to 243 (QTLAVQVGRQADRRAFTVPTIVVEDAQGKRRSSIDGSEPAKTSLQTT) are Cytoplasmic-facing. The chain crosses the membrane as a helical span at residues 244–264 (GLVTTIVFIYDCLMGFPVLVV). Topologically, residues 265–276 (SFSSLRADASAP) are extracellular. Residues 277 to 297 (WMALCVLWCSVAQALLLPVFL) traverse the membrane as a helical segment. Residues 298-609 (WACDRYRADL…LHSDSLGSAS (312 aa)) lie on the Cytoplasmic side of the membrane. Disordered stretches follow at residues 446–496 (DAPP…SASA) and 514–609 (ALRR…GSAS). Composition is skewed to low complexity over residues 458–479 (ESLL…RDSP) and 527–536 (AAPDGADPGE). Residues 571 to 583 (EPGGLRAAGGGGS) show a composition bias toward gly residues. The segment covering 584–596 (TSSFLSSPSESSG) has biased composition (low complexity).

It belongs to the G-protein coupled receptor 1 family.

Its subcellular location is the cell membrane. Functionally, orphan receptor. This is Probable G-protein coupled receptor 153 (GPR153) from Homo sapiens (Human).